The chain runs to 119 residues: Large ribosomal subunit protein uL22 (119 aa).

This sequence belongs to the universal ribosomal protein uL22 family. Part of the 50S ribosomal subunit.

Its function is as follows. This protein binds specifically to 23S rRNA; its binding is stimulated by other ribosomal proteins, e.g. L4, L17, and L20. It is important during the early stages of 50S assembly. It makes multiple contacts with different domains of the 23S rRNA in the assembled 50S subunit and ribosome. The globular domain of the protein is located near the polypeptide exit tunnel on the outside of the subunit, while an extended beta-hairpin is found that lines the wall of the exit tunnel in the center of the 70S ribosome. The chain is Large ribosomal subunit protein uL22 from Rhodopirellula baltica (strain DSM 10527 / NCIMB 13988 / SH1).